A 420-amino-acid polypeptide reads, in one-letter code: Acyl-coenzyme A amino acid N-acyltransferase 2 (420 aa).

Active-site charge relay system residues include Ser235, Asp329, and His363. The Microbody targeting signal signature appears at 418 to 420; the sequence is SKL.

This sequence belongs to the C/M/P thioester hydrolase family.

Its subcellular location is the peroxisome. In terms of biological role, acyltransferase which efficiently conjugates very long-chain and long-chain fatty acids to taurine. Shows no conjugation activity in the presence of glycine. The chain is Acyl-coenzyme A amino acid N-acyltransferase 2 from Mus musculus (Mouse).